Reading from the N-terminus, the 156-residue chain is Small ribosomal subunit protein uS7 (156 aa).

This sequence belongs to the universal ribosomal protein uS7 family. Part of the 30S ribosomal subunit. Contacts proteins S9 and S11.

Its function is as follows. One of the primary rRNA binding proteins, it binds directly to 16S rRNA where it nucleates assembly of the head domain of the 30S subunit. Is located at the subunit interface close to the decoding center, probably blocks exit of the E-site tRNA. The polypeptide is Small ribosomal subunit protein uS7 (Tolumonas auensis (strain DSM 9187 / NBRC 110442 / TA 4)).